We begin with the raw amino-acid sequence, 556 residues long: Urease subunit alpha 1 (556 aa).

In terms of domain architecture, Urease spans G127–L556. Ni(2+)-binding residues include H132, H134, and K212. K212 bears the N6-carboxylysine mark. Residue H214 participates in substrate binding. Ni(2+)-binding residues include H241 and H267. H315 serves as the catalytic Proton donor. A Ni(2+)-binding site is contributed by D355.

Belongs to the metallo-dependent hydrolases superfamily. Urease alpha subunit family. As to quaternary structure, may form a heterohexamer of 3 UreC (alpha) and 3 UreAB (gamma/beta) subunits. May also form a heterotrimer of UreA (gamma), UreB (beta) and UreC (alpha) subunits. Three heterotrimers associate to form the active enzyme. The cofactor is Ni cation. Post-translationally, carboxylation allows a single lysine to coordinate two nickel ions.

It is found in the cytoplasm. It catalyses the reaction urea + 2 H2O + H(+) = hydrogencarbonate + 2 NH4(+). Its pathway is nitrogen metabolism; urea degradation; CO(2) and NH(3) from urea (urease route): step 1/1. The chain is Urease subunit alpha 1 from Streptomyces avermitilis (strain ATCC 31267 / DSM 46492 / JCM 5070 / NBRC 14893 / NCIMB 12804 / NRRL 8165 / MA-4680).